The chain runs to 474 residues: Ribulose bisphosphate carboxylase large chain (474 aa).

Substrate-binding residues include Asn122 and Thr172. Lys174 functions as the Proton acceptor in the catalytic mechanism. Residue Lys176 participates in substrate binding. Residues Lys200, Asp202, and Glu203 each coordinate Mg(2+). Lys200 carries the N6-carboxylysine modification. His293 (proton acceptor) is an active-site residue. The substrate site is built by Arg294, His326, and Ser378.

The protein belongs to the RuBisCO large chain family. Type I subfamily. As to quaternary structure, heterohexadecamer of 8 large chains and 8 small chains; disulfide-linked. The disulfide link is formed within the large subunit homodimers. Mg(2+) serves as cofactor. In terms of processing, the disulfide bond which can form in the large chain dimeric partners within the hexadecamer appears to be associated with oxidative stress and protein turnover.

The protein resides in the carboxysome. The catalysed reaction is 2 (2R)-3-phosphoglycerate + 2 H(+) = D-ribulose 1,5-bisphosphate + CO2 + H2O. The enzyme catalyses D-ribulose 1,5-bisphosphate + O2 = 2-phosphoglycolate + (2R)-3-phosphoglycerate + 2 H(+). In terms of biological role, ruBisCO catalyzes two reactions: the carboxylation of D-ribulose 1,5-bisphosphate, the primary event in carbon dioxide fixation, as well as the oxidative fragmentation of the pentose substrate in the photorespiration process. Both reactions occur simultaneously and in competition at the same active site. The polypeptide is Ribulose bisphosphate carboxylase large chain (Synechococcus sp. (strain JA-3-3Ab) (Cyanobacteria bacterium Yellowstone A-Prime)).